Reading from the N-terminus, the 946-residue chain is Bifunctional glutamine synthetase adenylyltransferase/adenylyl-removing enzyme (946 aa).

The interval 1-440 (MKPLSSPLQQ…VFNELIGDDE (440 aa)) is adenylyl removase. The tract at residues 449 to 946 (SEQWRELWQD…ASWQKWLVEE (498 aa)) is adenylyl transferase.

Belongs to the GlnE family. Mg(2+) is required as a cofactor.

The catalysed reaction is [glutamine synthetase]-O(4)-(5'-adenylyl)-L-tyrosine + phosphate = [glutamine synthetase]-L-tyrosine + ADP. It carries out the reaction [glutamine synthetase]-L-tyrosine + ATP = [glutamine synthetase]-O(4)-(5'-adenylyl)-L-tyrosine + diphosphate. Functionally, involved in the regulation of glutamine synthetase GlnA, a key enzyme in the process to assimilate ammonia. When cellular nitrogen levels are high, the C-terminal adenylyl transferase (AT) inactivates GlnA by covalent transfer of an adenylyl group from ATP to specific tyrosine residue of GlnA, thus reducing its activity. Conversely, when nitrogen levels are low, the N-terminal adenylyl removase (AR) activates GlnA by removing the adenylyl group by phosphorolysis, increasing its activity. The regulatory region of GlnE binds the signal transduction protein PII (GlnB) which indicates the nitrogen status of the cell. The polypeptide is Bifunctional glutamine synthetase adenylyltransferase/adenylyl-removing enzyme (Escherichia coli O9:H4 (strain HS)).